The following is a 338-amino-acid chain: Glycerol-3-phosphate dehydrogenase [NAD(P)+] (338 aa).

Residues Ser-14, Phe-15, Arg-35, and Lys-109 each contribute to the NADPH site. Sn-glycerol 3-phosphate contacts are provided by Lys-109 and Gly-137. Ala-141 is a binding site for NADPH. Residues Lys-192, Asp-247, Ser-257, Arg-258, and Asn-259 each contribute to the sn-glycerol 3-phosphate site. Lys-192 functions as the Proton acceptor in the catalytic mechanism. Arg-258 contributes to the NADPH binding site. Residues Leu-282 and Glu-284 each coordinate NADPH.

Belongs to the NAD-dependent glycerol-3-phosphate dehydrogenase family.

It localises to the cytoplasm. It catalyses the reaction sn-glycerol 3-phosphate + NAD(+) = dihydroxyacetone phosphate + NADH + H(+). It carries out the reaction sn-glycerol 3-phosphate + NADP(+) = dihydroxyacetone phosphate + NADPH + H(+). Its pathway is membrane lipid metabolism; glycerophospholipid metabolism. Catalyzes the reduction of the glycolytic intermediate dihydroxyacetone phosphate (DHAP) to sn-glycerol 3-phosphate (G3P), the key precursor for phospholipid synthesis. This Rickettsia rickettsii (strain Iowa) protein is Glycerol-3-phosphate dehydrogenase [NAD(P)+].